Consider the following 323-residue polypeptide: Putative divalent cation/proton antiporter TMEM165 (323 aa).

Residues 1–33 (MAAAARGSGRAPTRRLLVLLLLQLLWAPAGVRA) form the signal peptide. At 34–89 (GPEEDLSHRNQEPPAPAQQLQPQPAAVQGLEPARAEKGLTPVAPVHTNKEDAAAQT) the chain is on the lumenal side. A compositionally biased stretch (basic and acidic residues) spans 35 to 44 (PEEDLSHRNQ). Residues 35–60 (PEEDLSHRNQEPPAPAQQLQPQPAAV) are disordered. Over residues 50–59 (AQQLQPQPAA) the composition is skewed to low complexity. A helical transmembrane segment spans residues 90 to 110 (NLGFIHAFVAAISVIIVSELG). Residues 111 to 126 (DKTFFIAAIMAMRYNR) are Cytoplasmic-facing. Residues 127–147 (LTVLAGAMLALALMTCLSVLF) traverse the membrane as a helical segment. Residues 148 to 151 (GYAT) lie on the Lumenal side of the membrane. A helical transmembrane segment spans residues 152–172 (TVIPRVYTYYVSTALFAIFGI). Over 173–227 (RMLREGLKMSPDEGQEELEEVQAELKKKDEEFQRTKLLNGPDVETGTSTAIPQKK) the chain is Cytoplasmic. The stretch at 184–211 (DEGQEELEEVQAELKKKDEEFQRTKLLN) forms a coiled coil. A helical transmembrane segment spans residues 228–248 (WLHFISPIFVQALTLTFLAEW). Topologically, residues 249 to 266 (GDRSQLTTIVLAAREDPY) are lumenal. Residues 267–287 (GVAVGGTVGHCLCTGLAVIGG) form a helical membrane-spanning segment. Residues 288–298 (RMIAQKISVRT) lie on the Cytoplasmic side of the membrane. A helical transmembrane segment spans residues 299–319 (VTIIGGIVFLAFAFSALFISP). The Lumenal portion of the chain corresponds to 320 to 323 (ESGF).

Belongs to the GDT1 family. In terms of tissue distribution, expressed in mammary epithelial cells (at protein level).

Its subcellular location is the golgi apparatus membrane. The enzyme catalyses Ca(2+)(in) + n H(+)(out) = Ca(2+)(out) + n H(+)(in). It carries out the reaction Mn(2+)(in) + n H(+)(out) = Mn(2+)(out) + n H(+)(in). In terms of biological role, putative divalent cation:proton antiporter that exchanges calcium or manganese ions for protons across the Golgi membrane. Mediates the reversible transport of calcium or manganese to the Golgi lumen driven by the proton gradient and possibly the membrane potential generated by V-ATPase. Provides calcium or manganese cofactors to resident Golgi enzymes and contributes to the maintenance of an acidic luminal Golgi pH required for proper functioning of the secretory pathway. Promotes Ca(2+) storage within the Golgi lumen of the mammary epithelial cells to be then secreted into milk. The transport mechanism and stoichiometry remains to be elucidated. This Mus musculus (Mouse) protein is Putative divalent cation/proton antiporter TMEM165.